The primary structure comprises 331 residues: Small ribosomal subunit protein uS2 (331 aa).

The protein belongs to the universal ribosomal protein uS2 family.

The protein is Small ribosomal subunit protein uS2 of Bradyrhizobium diazoefficiens (strain JCM 10833 / BCRC 13528 / IAM 13628 / NBRC 14792 / USDA 110).